A 757-amino-acid polypeptide reads, in one-letter code: Polyribonucleotide nucleotidyltransferase (757 aa).

The Mg(2+) site is built by aspartate 532 and aspartate 538. A KH domain is found at 598 to 657 (PRVTAIKVPVDKIGEVIGPKGKMINSITEQTGANISIEDDGTVFVGATDGPSAQAAIDMI). The S1 motif domain occupies 669–738 (GERFLGTVVK…NRGKISLIPV (70 aa)).

The protein belongs to the polyribonucleotide nucleotidyltransferase family. The cofactor is Mg(2+).

It is found in the cytoplasm. The enzyme catalyses RNA(n+1) + phosphate = RNA(n) + a ribonucleoside 5'-diphosphate. In terms of biological role, involved in mRNA degradation. Catalyzes the phosphorolysis of single-stranded polyribonucleotides processively in the 3'- to 5'-direction. The chain is Polyribonucleotide nucleotidyltransferase from Rhodococcus jostii (strain RHA1).